The primary structure comprises 710 residues: TRP-like ion channel pkd2 (710 aa).

Residues 1 to 23 form the signal peptide; sequence MRLWRSPLLLLVVVVELFSWADA. 9 consecutive transmembrane segments (helical) span residues 173-193, 197-217, 322-342, 376-396, 404-424, 466-486, 492-512, 525-545, and 555-575; these read WVMCMVIGIPLLIFLLISPVL, ALWEIVETMITLFQFAQIQAL, FFATGFSFFIILLFFSLLVAM, FFYRVIFVGFTQMSVLSMWEI, LAFLSMYVIVDMAVLLCYAFV, FFYFTFPLLLITLVRSMFIGF, KVQGCAMFGISVVVFALMVIL, IGVALMNLISGSFILVMCQAF, and IGIIFFALNAITMLLLILGIF. 2 positions are modified to phosphoserine: serine 599 and serine 632. A disordered region spans residues 689 to 710; sequence RISENNNNAERRRKPLPNNAFR.

The protein belongs to the transient receptor potential (TRP) ion channel family. In terms of assembly, interacts with rho1.

It localises to the cell membrane. It is found in the golgi apparatus membrane. Its function is as follows. Acts as a key signaling component in the regulation of cell shape and cell wall synthesis through interaction with GTPase Rho1. The polypeptide is TRP-like ion channel pkd2 (pkd2) (Schizosaccharomyces pombe (strain 972 / ATCC 24843) (Fission yeast)).